The chain runs to 136 residues: Putative pre-16S rRNA nuclease (136 aa).

It belongs to the YqgF nuclease family.

It is found in the cytoplasm. In terms of biological role, could be a nuclease involved in processing of the 5'-end of pre-16S rRNA. The protein is Putative pre-16S rRNA nuclease of Francisella tularensis subsp. tularensis (strain WY96-3418).